The primary structure comprises 503 residues: Glucosaminyl-phosphatidylinositol-acyltransferase PIGW (503 aa).

Residues 1-21 are Lumenal-facing; the sequence is MSQKQMKEAFVSNQNGTSVLE. A glycan (N-linked (GlcNAc...) asparagine) is linked at N15. Residues 22 to 42 form a helical membrane-spanning segment; the sequence is ITEGLCLPALCILCRGLLIIL. The Cytoplasmic segment spans residues 43 to 56; that stretch reads SQQLCSSLHNSRTR. A helical membrane pass occupies residues 57–75; the sequence is FLVDFAFLIVPLVTTLTIF. Residues 76–78 are Lumenal-facing; it reads SSF. The helical transmembrane segment at 79–98 threads the bilayer; that stretch reads VLLEYLVAIILGAGLLYEIY. The Cytoplasmic portion of the chain corresponds to 99-131; the sequence is CRRTCYARMPFQKICEKFLKVSLESEHIPAISC. Residues 132–152 form a helical membrane-spanning segment; the sequence is FRVVNSAFTAVAILAVDFPLF. Residues 153–160 are Lumenal-facing; that stretch reads PRRYAKTE. A helical membrane pass occupies residues 161-181; the sequence is LYGTGAMDYGVGGFIFGSAMV. Topologically, residues 182–201 are cytoplasmic; the sequence is SPEVRRKYTKGSRFCYLTKS. A helical transmembrane segment spans residues 202-222; sequence LYSLWPLVFLGVGRLVAIKSV. At 223-236 the chain is on the lumenal side; the sequence is DYQEHLTEYGVHWN. The helical transmembrane segment at 237–257 threads the bilayer; that stretch reads FFFTLIAVKLITSLLLLICPL. Residues 258 to 259 are Cytoplasmic-facing; sequence NR. The chain crosses the membrane as a helical span at residues 260-280; sequence SWVVAISIAALYQLALDFTPL. The Lumenal segment spans residues 281–304; it reads KSLILYGTDGSGTRVGLLNANREG. Residues 305–325 form a helical membrane-spanning segment; that stretch reads IISVLGYVAVHMAGVQTGLYV. At 326–337 the chain is on the cytoplasmic side; sequence LKKRSHIKDWIK. The helical transmembrane segment at 338–358 threads the bilayer; that stretch reads VACCILLTAIGLFISLYIVQV. The Lumenal portion of the chain corresponds to 359 to 369; it reads NVEVASRRMAN. The chain crosses the membrane as a helical span at residues 370–390; sequence LAFCIWIVASCLILLSSLLLG. Topologically, residues 391–447 are cytoplasmic; that stretch reads DIILSFAKFVIKEAAVPCSWKLIQSPTANKKHLESIVFDAKRKEPTLCLITAMNRNQ. S415 carries the post-translational modification Phosphoserine. Residues 448–468 form a helical membrane-spanning segment; sequence LLFFLLSNVTTGLVNLSIDTL. Over 469–472 the chain is Lumenal; the sequence is HSST. The chain crosses the membrane as a helical span at residues 473-493; sequence PWALCLLNLYMFTNCLIIYVL. Residues 494 to 503 are Cytoplasmic-facing; the sequence is HLQDKTIKFW.

This sequence belongs to the PIGW family.

The protein resides in the endoplasmic reticulum membrane. Its pathway is glycolipid biosynthesis; glycosylphosphatidylinositol-anchor biosynthesis. In terms of biological role, acyltransferase that catalyzes the acyl transfer from an acyl-CoA at the 2-OH position of the inositol ring of glucosaminyl phosphatidylinositol (GlcN-PI) to generate glucosaminyl acyl phosphatidylinositol (GlcN-(acyl)PI) and participates in the fourth step of GPI-anchor biosynthesis. Required for the transport of GPI-anchored proteins to the plasma membrane. Acetylation during GPI-anchor biosynthesis is not essential for the subsequent mannosylation and is usually removed soon after the attachment of GPIs to proteins. The polypeptide is Glucosaminyl-phosphatidylinositol-acyltransferase PIGW (Bos taurus (Bovine)).